The following is an 819-amino-acid chain: Zinc finger protein 27 (819 aa).

One can recognise a KRAB domain in the interval 1 to 75 (MDVTIDFSRE…KTLGAESCHD (75 aa)). Positions 93 to 123 (PKRPRHWDPPEDEPKHSSDLQTHDESNGLKR) are disordered. Basic and acidic residues predominate over residues 98–120 (HWDPPEDEPKHSSDLQTHDESNG). 21 consecutive C2H2-type zinc fingers follow at residues 205-227 (YVCV…QKTH), 233-255 (YKCG…RRIH), 261-283 (YDCS…QKIH), 289-311 (HGCV…QKIH), 317-339 (YVCI…RRIH), 345-367 (YACD…QRIH), 401-423 (SICA…QRTH), 429-451 (YQCG…RRIH), 457-479 (YVCV…QVIH), 485-507 (YQCG…KRIH), 513-535 (YVCS…QKTH), 541-563 (YVCA…QRIH), 569-591 (YGCS…EKIH), 597-619 (YGCR…QKIH), 625-647 (HVCA…QRIH), 653-675 (YGCT…RPIH), 681-703 (YVCA…QKTH), 709-731 (YACS…HRIH), 737-759 (YDCG…QRIH), 765-787 (YRCA…QTTH), and 793-815 (YKCV…ENVH).

This sequence belongs to the krueppel C2H2-type zinc-finger protein family.

The protein resides in the nucleus. Functionally, may be involved in transcriptional regulation. The sequence is that of Zinc finger protein 27 (Zfp27) from Mus musculus (Mouse).